Here is a 258-residue protein sequence, read N- to C-terminus: Imidazole glycerol phosphate synthase subunit HisF (258 aa).

Residues D12 and D131 contribute to the active site.

The protein belongs to the HisA/HisF family. In terms of assembly, heterodimer of HisH and HisF.

Its subcellular location is the cytoplasm. The enzyme catalyses 5-[(5-phospho-1-deoxy-D-ribulos-1-ylimino)methylamino]-1-(5-phospho-beta-D-ribosyl)imidazole-4-carboxamide + L-glutamine = D-erythro-1-(imidazol-4-yl)glycerol 3-phosphate + 5-amino-1-(5-phospho-beta-D-ribosyl)imidazole-4-carboxamide + L-glutamate + H(+). The protein operates within amino-acid biosynthesis; L-histidine biosynthesis; L-histidine from 5-phospho-alpha-D-ribose 1-diphosphate: step 5/9. Its function is as follows. IGPS catalyzes the conversion of PRFAR and glutamine to IGP, AICAR and glutamate. The HisF subunit catalyzes the cyclization activity that produces IGP and AICAR from PRFAR using the ammonia provided by the HisH subunit. This Corynebacterium glutamicum (strain R) protein is Imidazole glycerol phosphate synthase subunit HisF.